We begin with the raw amino-acid sequence, 616 residues long: Protein phosphatase EYA4 (616 aa).

N-acetylmethionine is present on Met1. Disordered regions lie at residues 1-66 (MEDT…VTTN), 186-211 (SQTQ…PGQT), and 277-345 (ADGT…DSDL). Glycyl lysine isopeptide (Lys-Gly) (interchain with G-Cter in SUMO2) cross-links involve residues Lys14 and Lys52. Low complexity predominate over residues 56 to 66 (SGLSSTSVTTN). The segment covering 277–311 (ADGTSSSTSTYQLQESLQGLTSQPGEFDTVQSPST) has biased composition (polar residues). Ser338 carries the post-translational modification Phosphoserine. Asp352 acts as the Nucleophile in catalysis. Residues Asp352, Asp354, and Asp580 each coordinate Mg(2+). Asp354 (proton donor) is an active-site residue.

Belongs to the HAD-like hydrolase superfamily. EYA family. Interacts with SIX3; translocates EYA4 from the cytoplasm to the nucleus and promotes activation of their target genes. The cofactor is Mg(2+). In the embryo, expressed mainly in the craniofacial mesenchyme, dermamyotome and limb.

Its subcellular location is the cytoplasm. It localises to the nucleus. It carries out the reaction O-phospho-L-tyrosyl-[protein] + H2O = L-tyrosyl-[protein] + phosphate. In terms of biological role, tyrosine phosphatase that specifically dephosphorylates 'Tyr-142' of histone H2AX (H2AXY142ph). 'Tyr-142' phosphorylation of histone H2AX plays a central role in DNA repair and acts as a mark that distinguishes between apoptotic and repair responses to genotoxic stress. Promotes efficient DNA repair by dephosphorylating H2AX, promoting the recruitment of DNA repair complexes containing MDC1. Its function as histone phosphatase probably explains its role in transcription regulation during organogenesis. May be involved in development of the eye. The chain is Protein phosphatase EYA4 (Eya4) from Mus musculus (Mouse).